The primary structure comprises 327 residues: N-acetylmuramoyl-L-alanine amidase sle1 (327 aa).

Residues 1 to 25 form the signal peptide; it reads MRKKIIATVIGTSALAAVTWTNADA. LysM domains lie at 27 to 70, 86 to 129, and 150 to 193; these read TTYK…SLKV, STYT…KLKV, and TTYT…KLKV. Residues 68 to 89 are disordered; sequence LKVSGSTSSSTSSNTSTGSTYT. Low complexity predominate over residues 71-87; sequence SGSTSSSTSSNTSTGST. Residues 203–327 enclose the Peptidase C51 domain; the sequence is GSSSTGSAGY…SQVSSYVYIH (125 aa).

The protein localises to the secreted. The protein resides in the cell surface. The enzyme catalyses Hydrolyzes the link between N-acetylmuramoyl residues and L-amino acid residues in certain cell-wall glycopeptides.. Peptidoglycan hydrolase involved in the splitting of the septum during cell division. In Staphylococcus saprophyticus subsp. saprophyticus (strain ATCC 15305 / DSM 20229 / NCIMB 8711 / NCTC 7292 / S-41), this protein is N-acetylmuramoyl-L-alanine amidase sle1 (sle1).